A 939-amino-acid polypeptide reads, in one-letter code: Translation initiation factor IF-2 (939 aa).

The segment at 57-274 is disordered; sequence RLKPAAPAAP…APTKKNEQKI (218 aa). 2 stretches are compositionally biased toward basic and acidic residues: residues 83–122 and 129–138; these read MEPKEEPQKEVKESVKEAPESLPESPKEEAFEAEIPKESV and LEQEPPKEEL. 2 stretches are compositionally biased toward polar residues: residues 146 to 158 and 170 to 180; these read ESASETLSDSNPL and VATTLATQTDA. The segment covering 208–227 has biased composition (basic and acidic residues); sequence KRSEEPAPKADRPSLEEART. Over residues 252-262 the composition is skewed to basic residues; sequence ARKKKKEKKKP. The region spanning 438-607 is the tr-type G domain; the sequence is ERPPVVTIMG…LVQSELLELK (170 aa). Residues 447 to 454 form a G1 region; the sequence is GHVDHGKT. Residue 447 to 454 coordinates GTP; that stretch reads GHVDHGKT. Positions 472–476 are G2; sequence GITQH. Residues 493 to 496 form a G3 region; it reads DTPG. GTP is bound by residues 493 to 497 and 547 to 550; these read DTPGH and NKVD. The interval 547 to 550 is G4; it reads NKVD. Positions 583 to 585 are G5; sequence SAK.

Belongs to the TRAFAC class translation factor GTPase superfamily. Classic translation factor GTPase family. IF-2 subfamily.

The protein resides in the cytoplasm. Its function is as follows. One of the essential components for the initiation of protein synthesis. Protects formylmethionyl-tRNA from spontaneous hydrolysis and promotes its binding to the 30S ribosomal subunits. Also involved in the hydrolysis of GTP during the formation of the 70S ribosomal complex. The chain is Translation initiation factor IF-2 from Wolinella succinogenes (strain ATCC 29543 / DSM 1740 / CCUG 13145 / JCM 31913 / LMG 7466 / NCTC 11488 / FDC 602W) (Vibrio succinogenes).